The primary structure comprises 189 residues: Putative ankyrin repeat protein TV1425 (189 aa).

ANK repeat units lie at residues 31–60, 64–93, 97–126, and 130–159; these read YNRT…KLED, EGST…NVNT, SGKT…NVND, and EGET…DISA.

The polypeptide is Putative ankyrin repeat protein TV1425 (Thermoplasma volcanium (strain ATCC 51530 / DSM 4299 / JCM 9571 / NBRC 15438 / GSS1)).